Reading from the N-terminus, the 1045-residue chain is Extracellular serine protease (1045 aa).

A signal peptide spans 1–27 (MILNKKLKLAYCVFLGCYGLSLHSSLA). The Peptidase S8 domain occupies 49-396 (QWGLEAISAE…WGRVNLRDAI (348 aa)). Catalysis depends on charge relay system residues Asp76, His112, and Ser341. The propeptide occupies 646 to 1045 (SLASTENDKE…SVNAGLTWRF (400 aa)). The Autotransporter domain maps to 769 to 1045 (IKADDNGAWA…SVNAGLTWRF (277 aa)).

Belongs to the peptidase S8 family.

Its subcellular location is the secreted. The sequence is that of Extracellular serine protease from Serratia marcescens.